A 147-amino-acid polypeptide reads, in one-letter code: uncharacterized protein (147 aa).

Belongs to the MG185/MG260 family.

This is an uncharacterized protein from Mycoplasma pneumoniae (strain ATCC 29342 / M129 / Subtype 1) (Mycoplasmoides pneumoniae).